The sequence spans 370 residues: uncharacterized protein (370 aa).

This sequence belongs to the metallo-dependent hydrolases superfamily.

This is an uncharacterized protein from Mycobacterium bovis (strain ATCC BAA-935 / AF2122/97).